We begin with the raw amino-acid sequence, 117 residues long: MAGFPLLLTLLTHCAGSWAQSVLTQPPSASGTPGQRVTISCSGSSSNIGSNYVYWYQQLPGTAPKLLIYSNNQRPSGVPDRFSGSKSGTSASLAISGLRSEDEADYYCAAWDDSLSG.

A signal peptide spans 1-19 (MAGFPLLLTLLTHCAGSWA). Gln-20 carries the post-translational modification Pyrrolidone carboxylic acid. The framework-1 stretch occupies residues 20–44 (QSVLTQPPSASGTPGQRVTISCSGS). Positions 20–117 (QSVLTQPPSA…CAAWDDSLSG (98 aa)) constitute an Ig-like domain. Cys-41 and Cys-108 form a disulfide bridge. Residues 45-52 (SSNIGSNY) are complementarity-determining-1. Positions 53–69 (VYWYQQLPGTAPKLLIY) are framework-2. Residues 70–72 (SNN) are complementarity-determining-2. Residues 73–108 (QRPSGVPDRFSGSKSGTSASLAISGLRSEDEADYYC) form a framework-3 region. Positions 109-117 (AAWDDSLSG) are complementarity-determining-3.

As to quaternary structure, immunoglobulins are composed of two identical heavy chains and two identical light chains; disulfide-linked.

The protein resides in the secreted. The protein localises to the cell membrane. Its function is as follows. V region of the variable domain of immunoglobulin light chains that participates in the antigen recognition. Immunoglobulins, also known as antibodies, are membrane-bound or secreted glycoproteins produced by B lymphocytes. In the recognition phase of humoral immunity, the membrane-bound immunoglobulins serve as receptors which, upon binding of a specific antigen, trigger the clonal expansion and differentiation of B lymphocytes into immunoglobulins-secreting plasma cells. Secreted immunoglobulins mediate the effector phase of humoral immunity, which results in the elimination of bound antigens. The antigen binding site is formed by the variable domain of one heavy chain, together with that of its associated light chain. Thus, each immunoglobulin has two antigen binding sites with remarkable affinity for a particular antigen. The variable domains are assembled by a process called V-(D)-J rearrangement and can then be subjected to somatic hypermutations which, after exposure to antigen and selection, allow affinity maturation for a particular antigen. The chain is Immunoglobulin lambda variable 1-47 from Homo sapiens (Human).